The chain runs to 1135 residues: Protocadherin-18 (1135 aa).

A signal peptide spans 1-27 (MHQMNAKMHFRFVFALLIVSFNHDVLG). Cadherin domains are found at residues 28–137 (KNLK…SPQF), 138–246 (SRSL…SPAF), 247–354 (EQQS…KPEI), 361–465 (PGKE…PPHF), 466–576 (QRSR…VPVV), and 582–688 (RNNT…STAM). Residues 28–699 (KNLKYRIYEE…SVSQASLDVS (672 aa)) are Extracellular-facing. A glycan (N-linked (GlcNAc...) asparagine) is linked at asparagine 103. Residues asparagine 269, asparagine 420, asparagine 559, asparagine 583, and asparagine 641 are each glycosylated (N-linked (GlcNAc...) asparagine). A helical membrane pass occupies residues 700–720 (MIIIISLGAICAVLLVIMVLF). Residues 721 to 1135 (ATRCNREKKD…NKLLQDVRQS (415 aa)) lie on the Cytoplasmic side of the membrane. Disordered regions lie at residues 769-800 (LPIRSHHRSSPSSSPTLERGQMGSRQSHNSHQ), 869-889 (SLKDSGRGDSEAGDSDYDLGR), 942-1003 (DYRS…STSS), and 1023-1046 (YSECSEVDRSNSLERRKGPLPAKT). Over residues 791 to 800 (GSRQSHNSHQ) the composition is skewed to polar residues. The segment covering 869 to 878 (SLKDSGRGDS) has biased composition (basic and acidic residues). The interval 893–1135 (IDRLLGEGFS…NKLLQDVRQS (243 aa)) is interaction with DAB1. Positions 1028–1039 (EVDRSNSLERRK) are enriched in basic and acidic residues.

Interacts with DAB1. In terms of tissue distribution, expressed in all tissues, with highest expression in lung and ovary.

It localises to the cell membrane. Functionally, potential calcium-dependent cell-adhesion protein. The protein is Protocadherin-18 (PCDH18) of Homo sapiens (Human).